The primary structure comprises 732 residues: Guanylate cyclase soluble subunit alpha-2 (732 aa).

The disordered stretch occupies residues 1–58 (MSRRKISSESFSSLGSDYLETSPEEEGECPLSRLCWNGSRSPPGPLEPSPAAAAAAAA). Residues 49 to 58 (SPAAAAAAAA) are compositionally biased toward low complexity. A Guanylate cyclase domain is found at 521–648 (TMLFSDIVGF…NNVTLASKFE (128 aa)).

Belongs to the adenylyl cyclase class-4/guanylyl cyclase family. Heterodimer of an alpha and a beta chain. Isoform 1 is expressed in fetal brain, liver, colon, endothelium and testis. Isoform 2 is expressed only in liver, colon and endothelium.

It is found in the cytoplasm. It carries out the reaction GTP = 3',5'-cyclic GMP + diphosphate. With respect to regulation, activated by nitric oxide in the presence of magnesium or manganese ions. Its function is as follows. Has guanylyl cyclase on binding to the beta-1 subunit. In terms of biological role, isoform 2 acts as a negative regulator of guanylyl cyclase activity as it forms non-functional heterodimers with the beta subunits. The polypeptide is Guanylate cyclase soluble subunit alpha-2 (GUCY1A2) (Homo sapiens (Human)).